Here is a 255-residue protein sequence, read N- to C-terminus: NAD kinase (255 aa).

The active-site Proton acceptor is D44. NAD(+)-binding positions include 44–45 (DG), H49, 114–115 (NE), D144, A152, 155–160 (SAYNLS), and Q216.

The protein belongs to the NAD kinase family. A divalent metal cation is required as a cofactor.

The protein resides in the cytoplasm. The catalysed reaction is NAD(+) + ATP = ADP + NADP(+) + H(+). Its function is as follows. Involved in the regulation of the intracellular balance of NAD and NADP, and is a key enzyme in the biosynthesis of NADP. Catalyzes specifically the phosphorylation on 2'-hydroxyl of the adenosine moiety of NAD to yield NADP. The sequence is that of NAD kinase from Rickettsia canadensis (strain McKiel).